The primary structure comprises 139 residues: Protein COLD-REGULATED 15A, chloroplastic (139 aa).

The N-terminal 40 residues, 1 to 40 (MAMSFSGAVLTGMASSFHSGAKQSSFGAVRVGQKTQFVVV), are a transit peptide targeting the chloroplast.

It belongs to the COR15 protein family. As to quaternary structure, forms homooligomers which interact with potential stromal substrates in the stroma of chloroplasts. Interacts with the galactose headgroup of the chloroplast lipid monogalactosyldiacylglycerol (MGDG).

It is found in the plastid. Its subcellular location is the chloroplast stroma. Exhibits cryoprotective activity toward stromal substrates (e.g. LDH and rubisco) in chloroplasts and in protoplasts and confers freezing tolerance to plants in a CBF-dependent manner. Protectant against various stresses (e.g. cold, drought and heat stress) by preventing protein aggregation (e.g. LDH) and attenuating enzyme inactivation. Influences the intrinsic curvature of the inner membrane of the chloroplast envelope, and modulates the freeze-induced lamellar-to-hexagonal II phase transitions that occur in regions where the plasma membrane is brought into close apposition with the chloroplast envelope during freeze-induced osmotic contraction. Mediates a shift in the melting curves of phospholipids-containing membranes to lower temperatures. Involved in the regulation of leaf senescence by abscisic acid (ABA) in a VNI2-dependent manner. This is Protein COLD-REGULATED 15A, chloroplastic from Arabidopsis thaliana (Mouse-ear cress).